The sequence spans 671 residues: Diguanylate cyclase DgcP (671 aa).

Disordered stretches follow at residues 204 to 223 (AAPS…PPQP) and 278 to 298 (EAGA…PEAP). Asp549 contributes to the Mg(2+) binding site. 3 residues coordinate substrate: Asn557, His562, and Asp566. Glu592 provides a ligand contact to Mg(2+). Glu592 is a catalytic residue.

In terms of assembly, homodimer. Mg(2+) serves as cofactor.

It is found in the cell inner membrane. It carries out the reaction 2 GTP = 3',3'-c-di-GMP + 2 diphosphate. Its pathway is purine metabolism; 3',5'-cyclic di-GMP biosynthesis. Functionally, catalyzes the synthesis of cyclic-di-GMP (c-di-GMP) via the condensation of 2 GTP molecules. Cyclic-di-GMP is a second messenger which controls cell surface-associated traits in bacteria. Localizes at the cell poles through interaction with FimV where it increases the local pools of c-di-GMP. The protein is Diguanylate cyclase DgcP (dgcP) of Pseudomonas aeruginosa (strain ATCC 15692 / DSM 22644 / CIP 104116 / JCM 14847 / LMG 12228 / 1C / PRS 101 / PAO1).